Reading from the N-terminus, the 53-residue chain is uncharacterized protein (53 aa).

The N-terminal stretch at 1–19 (MKLLTILILFYSFFMNLQA) is a signal peptide.

This is an uncharacterized protein from Autographa californica nuclear polyhedrosis virus (AcMNPV).